A 104-amino-acid chain; its full sequence is L-rhamnose mutarotase (104 aa).

A substrate-binding site is contributed by Y18. H22 acts as the Proton donor in catalysis. Residues Y41 and 76–77 (WW) each bind substrate.

It belongs to the rhamnose mutarotase family. Homodimer.

It localises to the cytoplasm. The enzyme catalyses alpha-L-rhamnose = beta-L-rhamnose. It functions in the pathway carbohydrate metabolism; L-rhamnose metabolism. Involved in the anomeric conversion of L-rhamnose. The polypeptide is L-rhamnose mutarotase (Salmonella newport (strain SL254)).